We begin with the raw amino-acid sequence, 284 residues long: 2,3,4,5-tetrahydropyridine-2,6-dicarboxylate N-succinyltransferase (284 aa).

Residues Arg-111 and Asp-148 each coordinate substrate.

The protein belongs to the transferase hexapeptide repeat family. As to quaternary structure, homotrimer.

The protein localises to the cytoplasm. It carries out the reaction (S)-2,3,4,5-tetrahydrodipicolinate + succinyl-CoA + H2O = (S)-2-succinylamino-6-oxoheptanedioate + CoA. The protein operates within amino-acid biosynthesis; L-lysine biosynthesis via DAP pathway; LL-2,6-diaminopimelate from (S)-tetrahydrodipicolinate (succinylase route): step 1/3. The sequence is that of 2,3,4,5-tetrahydropyridine-2,6-dicarboxylate N-succinyltransferase from Brucella anthropi (strain ATCC 49188 / DSM 6882 / CCUG 24695 / JCM 21032 / LMG 3331 / NBRC 15819 / NCTC 12168 / Alc 37) (Ochrobactrum anthropi).